The chain runs to 262 residues: Cytochrome c oxidase subunit 3 (262 aa).

The next 7 helical transmembrane spans lie at 16–36 (PWPLTGAIGAMTTVTGLVQWF), 42–59 (TLFLLGNIITMLTMYQWW), 83–103 (GMILFIISEVFFFISFFWAFF), 128–148 (FQIPLLNTAILLASGVTVTWA), 163–183 (SLFFTVLLGIYFSILQAYEYI), 198–218 (FFVATGFHGLHVLIGTSFLLI), and 240–260 (AWYWHFVDVVWLFLYISIYWW).

Belongs to the cytochrome c oxidase subunit 3 family. In terms of assembly, component of the cytochrome c oxidase (complex IV, CIV), a multisubunit enzyme composed of a catalytic core of 3 subunits and several supernumerary subunits. The complex exists as a monomer or a dimer and forms supercomplexes (SCs) in the inner mitochondrial membrane with ubiquinol-cytochrome c oxidoreductase (cytochrome b-c1 complex, complex III, CIII).

Its subcellular location is the mitochondrion inner membrane. It catalyses the reaction 4 Fe(II)-[cytochrome c] + O2 + 8 H(+)(in) = 4 Fe(III)-[cytochrome c] + 2 H2O + 4 H(+)(out). Its function is as follows. Component of the cytochrome c oxidase, the last enzyme in the mitochondrial electron transport chain which drives oxidative phosphorylation. The respiratory chain contains 3 multisubunit complexes succinate dehydrogenase (complex II, CII), ubiquinol-cytochrome c oxidoreductase (cytochrome b-c1 complex, complex III, CIII) and cytochrome c oxidase (complex IV, CIV), that cooperate to transfer electrons derived from NADH and succinate to molecular oxygen, creating an electrochemical gradient over the inner membrane that drives transmembrane transport and the ATP synthase. Cytochrome c oxidase is the component of the respiratory chain that catalyzes the reduction of oxygen to water. Electrons originating from reduced cytochrome c in the intermembrane space (IMS) are transferred via the dinuclear copper A center (CU(A)) of subunit 2 and heme A of subunit 1 to the active site in subunit 1, a binuclear center (BNC) formed by heme A3 and copper B (CU(B)). The BNC reduces molecular oxygen to 2 water molecules using 4 electrons from cytochrome c in the IMS and 4 protons from the mitochondrial matrix. This chain is Cytochrome c oxidase subunit 3, found in Aedes aegypti (Yellowfever mosquito).